Reading from the N-terminus, the 385-residue chain is 1-deoxy-D-xylulose 5-phosphate reductoisomerase (385 aa).

Residues Thr-10, Gly-11, Ser-12, Ile-13, Gly-36, Asn-38, and Asn-121 each contribute to the NADPH site. Residue Lys-122 participates in 1-deoxy-D-xylulose 5-phosphate binding. Glu-123 is a binding site for NADPH. Asp-147 contacts Mn(2+). Ser-148, Glu-149, Ser-173, and His-196 together coordinate 1-deoxy-D-xylulose 5-phosphate. Mn(2+) is bound at residue Glu-149. Gly-202 contributes to the NADPH binding site. Ser-209, Asn-214, Lys-215, and Glu-218 together coordinate 1-deoxy-D-xylulose 5-phosphate. Glu-218 contributes to the Mn(2+) binding site.

It belongs to the DXR family. Requires Mg(2+) as cofactor. Mn(2+) serves as cofactor.

It carries out the reaction 2-C-methyl-D-erythritol 4-phosphate + NADP(+) = 1-deoxy-D-xylulose 5-phosphate + NADPH + H(+). It participates in isoprenoid biosynthesis; isopentenyl diphosphate biosynthesis via DXP pathway; isopentenyl diphosphate from 1-deoxy-D-xylulose 5-phosphate: step 1/6. In terms of biological role, catalyzes the NADPH-dependent rearrangement and reduction of 1-deoxy-D-xylulose-5-phosphate (DXP) to 2-C-methyl-D-erythritol 4-phosphate (MEP). The sequence is that of 1-deoxy-D-xylulose 5-phosphate reductoisomerase from Exiguobacterium sp. (strain ATCC BAA-1283 / AT1b).